The chain runs to 211 residues: Probable nicotinate-nucleotide adenylyltransferase (211 aa).

The protein belongs to the NadD family.

It carries out the reaction nicotinate beta-D-ribonucleotide + ATP + H(+) = deamido-NAD(+) + diphosphate. Its pathway is cofactor biosynthesis; NAD(+) biosynthesis; deamido-NAD(+) from nicotinate D-ribonucleotide: step 1/1. In terms of biological role, catalyzes the reversible adenylation of nicotinate mononucleotide (NaMN) to nicotinic acid adenine dinucleotide (NaAD). The polypeptide is Probable nicotinate-nucleotide adenylyltransferase (Cellvibrio japonicus (strain Ueda107) (Pseudomonas fluorescens subsp. cellulosa)).